The primary structure comprises 399 residues: Elongation factor Tu (399 aa).

Residues 10 to 209 (KPHVNVGTIG…EVDKYIPTPQ (200 aa)) form the tr-type G domain. The segment at 19-26 (GHVDHGKT) is G1. 19–26 (GHVDHGKT) contacts GTP. Residue threonine 26 participates in Mg(2+) binding. Residues 60 to 64 (GITIA) form a G2 region. Positions 81-84 (DCPG) are G3. GTP-binding positions include 81 to 85 (DCPGH) and 136 to 139 (NKQD). The segment at 136–139 (NKQD) is G4. Residues 174–176 (SAL) form a G5 region.

Belongs to the TRAFAC class translation factor GTPase superfamily. Classic translation factor GTPase family. EF-Tu/EF-1A subfamily. In terms of assembly, monomer.

It is found in the cytoplasm. It catalyses the reaction GTP + H2O = GDP + phosphate + H(+). Its function is as follows. GTP hydrolase that promotes the GTP-dependent binding of aminoacyl-tRNA to the A-site of ribosomes during protein biosynthesis. In Helicobacter hepaticus (strain ATCC 51449 / 3B1), this protein is Elongation factor Tu.